Here is a 673-residue protein sequence, read N- to C-terminus: NACHT, LRR and PYD domains-containing protein 10 (673 aa).

One can recognise a Pyrin domain in the interval 1-92 (MALARANSPQ…VDYLNQVCLN (92 aa)). One can recognise an NACHT domain in the interval 163 to 469 (PIVVMQGSAG…AMSFLVKEDQ (307 aa)). Position 169–176 (169–176 (GSAGTGKT)) interacts with ATP. The segment at 578-673 (SDKKKSVSVT…DGEMIDKMNG (96 aa)) is disordered. Over residues 584 to 597 (VSVTSSFSSGKVQS) the composition is skewed to low complexity. Positions 633-648 (ASREKGHMEMNDKEDG) are enriched in basic and acidic residues. Over residues 649-658 (GVEEQEDEEG) the composition is skewed to acidic residues. Basic and acidic residues predominate over residues 659–673 (QTLKKDGEMIDKMNG).

The protein belongs to the NLRP family. In terms of assembly, oligomerizes. Interacts with PYCARD. Also interacts with CASP1 and IL1B. Interacts with NOD1 and components of the NOD1 signaling pathway including RIPK2, NR2C2/TAK1 and IKBKG/NEMO. In terms of tissue distribution, expressed in skin, tongue, heart, colon and several cell lines of hematopoietic and myocytic origin but not in kidney, skeletal muscle, spleen, liver, lung, thymus, brain or small intestine (at protein level).

It is found in the cytoplasm. The protein resides in the cell membrane. Functionally, inhibits autoprocessing of CASP1, CASP1-dependent IL1B secretion, PYCARD aggregation and PYCARD-mediated apoptosis but not apoptosis induced by FAS or BID. Displays anti-inflammatory activity. Required for immunity against C.albicans infection. Involved in the innate immune response by contributing to pro-inflammatory cytokine release in response to invasive bacterial infection. Contributes to T-cell-mediated inflammatory responses in the skin. Plays a role in protection against periodontitis through its involvement in induction of IL1A via ERK activation in oral epithelial cells infected with periodontal pathogens. Exhibits both ATPase and GTPase activities. This is NACHT, LRR and PYD domains-containing protein 10 (Nlrp10) from Mus musculus (Mouse).